Here is a 466-residue protein sequence, read N- to C-terminus: Chromosomal replication initiator protein DnaA (466 aa).

Residues 1 to 86 form a domain I, interacts with DnaA modulators region; it reads MSLSLWQQCL…EVGTKPVTQT (86 aa). Residues 86–129 are domain II; it reads TLKTPVHNVVAPTQTTTAQPQRVAPAARSGWDNVPAPAEPTYRS. Positions 130–346 are domain III, AAA+ region; the sequence is NVNVKHTFDN…GALNRVIANA (217 aa). Residues G174, G176, K177, and T178 each contribute to the ATP site. The tract at residues 347-466 is domain IV, binds dsDNA; that stretch reads NFTGRAITID…FSNLIRTLSS (120 aa).

Belongs to the DnaA family. As to quaternary structure, oligomerizes as a right-handed, spiral filament on DNA at oriC.

The protein localises to the cytoplasm. Plays an essential role in the initiation and regulation of chromosomal replication. ATP-DnaA binds to the origin of replication (oriC) to initiate formation of the DNA replication initiation complex once per cell cycle. Binds the DnaA box (a 9 base pair repeat at the origin) and separates the double-stranded (ds)DNA. Forms a right-handed helical filament on oriC DNA; dsDNA binds to the exterior of the filament while single-stranded (ss)DNA is stabiized in the filament's interior. The ATP-DnaA-oriC complex binds and stabilizes one strand of the AT-rich DNA unwinding element (DUE), permitting loading of DNA polymerase. After initiation quickly degrades to an ADP-DnaA complex that is not apt for DNA replication. Binds acidic phospholipids. The protein is Chromosomal replication initiator protein DnaA of Salmonella enteritidis PT4 (strain P125109).